The chain runs to 471 residues: Alkaline phosphatase (471 aa).

An N-terminal signal peptide occupies residues 1-21 (MKQSTIALALLPLLFTPVTKA). Aspartate 73 contacts Mg(2+). Residue aspartate 73 coordinates Zn(2+). The active-site Phosphoserine intermediate is the serine 124. Residues aspartate 175 and threonine 177 each contribute to the Mg(2+) site. Disulfide bonds link cysteine 190–cysteine 200 and cysteine 308–cysteine 358. Glutamate 344 is a binding site for Mg(2+). Zn(2+) is bound by residues aspartate 349, histidine 353, aspartate 391, histidine 392, and histidine 434.

Belongs to the alkaline phosphatase family. In terms of assembly, isozymes 1 and 3 are a dimer of identical chains, isozyme 2 is a dimer of heterogeneous chains, one of each of the subunits from isozymes 1 and 3. Requires Mg(2+) as cofactor. It depends on Zn(2+) as a cofactor.

The protein resides in the periplasm. The catalysed reaction is a phosphate monoester + H2O = an alcohol + phosphate. The chain is Alkaline phosphatase (phoA) from Escherichia coli (strain K12).